The sequence spans 190 residues: MELILGSQSSTRANLLKEHGIKFEQKALYFDEESLKTTDPREFVYLACKGKLEKAKELLANNCAIVVADSVVSVGNRMQRKAKNKQEALEFLKRQNGHEIEVLTCSALISPVLEWLDLSVFRARLKAFDPSEIEKYLESGLWQESAGCVRLEDFHKPYIKSSSENLSVGLGLNVEGLLGALKLGAKLSSL.

Aspartate 69 acts as the Proton acceptor in catalysis.

This sequence belongs to the Maf family. The cofactor is a divalent metal cation.

The protein resides in the cytoplasm. The enzyme catalyses a ribonucleoside 5'-triphosphate + H2O = a ribonucleoside 5'-phosphate + diphosphate + H(+). The catalysed reaction is a 2'-deoxyribonucleoside 5'-triphosphate + H2O = a 2'-deoxyribonucleoside 5'-phosphate + diphosphate + H(+). In terms of biological role, nucleoside triphosphate pyrophosphatase. May have a dual role in cell division arrest and in preventing the incorporation of modified nucleotides into cellular nucleic acids. The protein is Nucleoside triphosphate pyrophosphatase of Helicobacter pylori (strain ATCC 700392 / 26695) (Campylobacter pylori).